A 362-amino-acid chain; its full sequence is Tyrosine recombinase XerH (362 aa).

The Core-binding (CB) domain occupies 43-140 (ECLNELNQAC…ALLGLFSYID (98 aa)). The Tyr recombinase domain occupies 170–357 (KLPTHLNNEE…DKQRLEEAAS (188 aa)). Active-site residues include R213, K239, H309, R312, and H335. Catalysis depends on Y344, which acts as the O-(3'-phospho-DNA)-tyrosine intermediate.

Belongs to the 'phage' integrase family. XerH subfamily.

Its subcellular location is the cytoplasm. Its activity is regulated as follows. FtsK is required for recombination. Site-specific tyrosine recombinase, which acts by catalyzing the cutting and rejoining of the recombining DNA molecules. Involved in chromosome segregation. May contribute to chromosome decatenation. In Helicobacter pylori (strain ATCC 700392 / 26695) (Campylobacter pylori), this protein is Tyrosine recombinase XerH.